The primary structure comprises 434 residues: MSADGAEADGSTQVTVEEPVQQPSVVDRVASMPLISSTCDMVSAAYASTKESYPHIKTVCDAAEKGVRTLTAAAVSGAQPILSKLEPQIASASEYAHRGLDKLEENLPILQQPTEKVLADTKELVSSKVSGAQEMVSSAKDTVATQLSEAVDATRGAVQSGVDKTKSVVTGGVQSVMGSRLGQMVLSGVDTVLGKSEEWADNHLPLTDAELARIATSLDGFDVASVQQQRQEQSYFVRLGSLSERLRQHAYEHSLGKLRATKQRAQEALLQLSQVLSLMETVKQGVDQKLVEGQEKLHQMWLSWNQKQLQGPEKEPPKPEQVESRALTMFRDIAQQLQATCTSLGSSIQGLPTNVKDQVQQARRQVEDLQATFSSIHSFQDLSSSILAQSRERVASAREALDHMVEYVAQNTPVTWLVGPFAPGITEKAPEEKK.

Residues 1–22 are disordered; sequence MSADGAEADGSTQVTVEEPVQQ. Ser-2 bears the N-acetylserine mark. Ser-31 is subject to Phosphoserine. N6-acetyllysine is present on Lys-65. Phosphoserine is present on Ser-91. Lys-122 participates in a covalent cross-link: Glycyl lysine isopeptide (Lys-Gly) (interchain with G-Cter in SUMO1). A phosphoserine mark is found at Ser-130 and Ser-148. Phosphothreonine is present on Thr-170. Phosphoserine occurs at positions 175 and 179. Thr-216 carries the phosphothreonine modification. Ser-217 and Ser-241 each carry phosphoserine. Phosphotyrosine is present on Tyr-251. 2 coiled-coil regions span residues 252–277 and 353–377; these read EHSL…QVLS and TNVK…SSIH.

It belongs to the perilipin family. Homooligomer. Interacts with M6PR (via the cytoplasmic domain). Interacts with IGF2R (via the cytoplasmic domain). In terms of assembly, may exist as a homodimer. Post-translationally, phosphorylation at Tyr-251 by isoform 1 of CHKA (CHKalpha2) promotes dissociation from lipid droplets: dissociation is followed by recruitment of autophagosome machinery to lipid droplets and subsequent lipid droplet lipolysis.

Its subcellular location is the lipid droplet. The protein resides in the endosome membrane. The protein localises to the cytoplasm. Structural component of lipid droplets, which is required for the formation and maintenance of lipid storage droplets. Required for the transport of mannose 6-phosphate receptors (MPR) from endosomes to the trans-Golgi network. The sequence is that of Perilipin-3 (PLIN3) from Homo sapiens (Human).